The following is a 178-amino-acid chain: Ribulose bisphosphate carboxylase small subunit, chloroplastic (178 aa).

The N-terminal 54 residues, 1 to 54 (MASISSSVATVSRTAPAQANMVAPFTGLKSNAAFPTTKKANDFSTLPSNGGRVQ), are a transit peptide targeting the chloroplast.

Belongs to the RuBisCO small chain family. In terms of assembly, heterohexadecamer of 8 large and 8 small subunits.

The protein localises to the plastid. It is found in the chloroplast. RuBisCO catalyzes two reactions: the carboxylation of D-ribulose 1,5-bisphosphate, the primary event in carbon dioxide fixation, as well as the oxidative fragmentation of the pentose substrate. Both reactions occur simultaneously and in competition at the same active site. Although the small subunit is not catalytic it is essential for maximal activity. The polypeptide is Ribulose bisphosphate carboxylase small subunit, chloroplastic (Helianthus annuus (Common sunflower)).